The sequence spans 352 residues: UDP-N-acetylglucosamine--N-acetylmuramyl-(pentapeptide) pyrophosphoryl-undecaprenol N-acetylglucosamine transferase (352 aa).

Residues 11–13 (TGG), N120, R161, S188, and Q286 each bind UDP-N-acetyl-alpha-D-glucosamine.

Belongs to the glycosyltransferase 28 family. MurG subfamily.

It is found in the cell inner membrane. It catalyses the reaction di-trans,octa-cis-undecaprenyl diphospho-N-acetyl-alpha-D-muramoyl-L-alanyl-D-glutamyl-meso-2,6-diaminopimeloyl-D-alanyl-D-alanine + UDP-N-acetyl-alpha-D-glucosamine = di-trans,octa-cis-undecaprenyl diphospho-[N-acetyl-alpha-D-glucosaminyl-(1-&gt;4)]-N-acetyl-alpha-D-muramoyl-L-alanyl-D-glutamyl-meso-2,6-diaminopimeloyl-D-alanyl-D-alanine + UDP + H(+). Its pathway is cell wall biogenesis; peptidoglycan biosynthesis. In terms of biological role, cell wall formation. Catalyzes the transfer of a GlcNAc subunit on undecaprenyl-pyrophosphoryl-MurNAc-pentapeptide (lipid intermediate I) to form undecaprenyl-pyrophosphoryl-MurNAc-(pentapeptide)GlcNAc (lipid intermediate II). This is UDP-N-acetylglucosamine--N-acetylmuramyl-(pentapeptide) pyrophosphoryl-undecaprenol N-acetylglucosamine transferase from Prochlorococcus marinus (strain NATL1A).